Reading from the N-terminus, the 668-residue chain is Biotin biosynthesis bifunctional protein BioWF (668 aa).

A substrate-binding site is contributed by Arg293. 380 to 381 (GY) serves as a coordination point for pyridoxal 5'-phosphate. Residue His405 coordinates substrate. Pyridoxal 5'-phosphate-binding positions include Ser451, 476–479 (DDAH), and 507–510 (TASK). Lys510 is subject to N6-(pyridoxal phosphate)lysine.

In the N-terminal section; belongs to the BioW family. This sequence in the C-terminal section; belongs to the class-II pyridoxal-phosphate-dependent aminotransferase family. BioF subfamily. Homodimer. The cofactor is Mg(2+). Pyridoxal 5'-phosphate serves as cofactor.

It catalyses the reaction heptanedioate + ATP + CoA = 6-carboxyhexanoyl-CoA + AMP + diphosphate. The enzyme catalyses 6-carboxyhexanoyl-[ACP] + L-alanine + H(+) = (8S)-8-amino-7-oxononanoate + holo-[ACP] + CO2. Its pathway is metabolic intermediate metabolism; pimeloyl-CoA biosynthesis; pimeloyl-CoA from pimelate: step 1/1. It participates in cofactor biosynthesis; biotin biosynthesis. In terms of biological role, catalyzes both the decarboxylative condensation of pimeloyl-[acyl-carrier protein] and L-alanine to produce 8-amino-7-oxononanoate (AON), [acyl-carrier protein], and carbon dioxide, and the transformation of pimelate into pimeloyl-CoA with concomitant hydrolysis of ATP to AMP. In Cutibacterium acnes (strain SK137) (Propionibacterium acnes), this protein is Biotin biosynthesis bifunctional protein BioWF.